The chain runs to 321 residues: Malate dehydrogenase (321 aa).

NAD(+)-binding positions include 10–15 and Asp-34; that span reads GSGMIG. Residues Arg-83 and Arg-89 each coordinate substrate. NAD(+) contacts are provided by residues Asn-96 and 119-121; that span reads ITN. Substrate contacts are provided by Asn-121 and Arg-152. Residue His-176 is the Proton acceptor of the active site.

The protein belongs to the LDH/MDH superfamily. MDH type 3 family.

The enzyme catalyses (S)-malate + NAD(+) = oxaloacetate + NADH + H(+). Its function is as follows. Catalyzes the reversible oxidation of malate to oxaloacetate. The polypeptide is Malate dehydrogenase (Bartonella bacilliformis (strain ATCC 35685 / KC583 / Herrer 020/F12,63)).